A 176-amino-acid polypeptide reads, in one-letter code: PKHD-type hydroxylase Mfla_0096 (176 aa).

Positions 78-147 (KVFPPLFNRY…NQIARGTYGA (70 aa)) constitute a Fe2OG dioxygenase domain.

Fe(2+) serves as cofactor. Requires L-ascorbate as cofactor.

The chain is PKHD-type hydroxylase Mfla_0096 from Methylobacillus flagellatus (strain ATCC 51484 / DSM 6875 / VKM B-1610 / KT).